A 380-amino-acid chain; its full sequence is Queuine tRNA-ribosyltransferase (380 aa).

Residue aspartate 95 is the Proton acceptor of the active site. Residues 95-99 (DSGGF), aspartate 149, glutamine 192, and glycine 219 contribute to the substrate site. Positions 250-256 (GVGSPDS) are RNA binding. The active-site Nucleophile is aspartate 269. An RNA binding; important for wobble base 34 recognition region spans residues 274 to 278 (TRIGR). Positions 307, 309, 312, and 338 each coordinate Zn(2+).

This sequence belongs to the queuine tRNA-ribosyltransferase family. Homodimer. Within each dimer, one monomer is responsible for RNA recognition and catalysis, while the other monomer binds to the replacement base PreQ1. Zn(2+) serves as cofactor.

The enzyme catalyses 7-aminomethyl-7-carbaguanine + guanosine(34) in tRNA = 7-aminomethyl-7-carbaguanosine(34) in tRNA + guanine. It functions in the pathway tRNA modification; tRNA-queuosine biosynthesis. Its function is as follows. Catalyzes the base-exchange of a guanine (G) residue with the queuine precursor 7-aminomethyl-7-deazaguanine (PreQ1) at position 34 (anticodon wobble position) in tRNAs with GU(N) anticodons (tRNA-Asp, -Asn, -His and -Tyr). Catalysis occurs through a double-displacement mechanism. The nucleophile active site attacks the C1' of nucleotide 34 to detach the guanine base from the RNA, forming a covalent enzyme-RNA intermediate. The proton acceptor active site deprotonates the incoming PreQ1, allowing a nucleophilic attack on the C1' of the ribose to form the product. After dissociation, two additional enzymatic reactions on the tRNA convert PreQ1 to queuine (Q), resulting in the hypermodified nucleoside queuosine (7-(((4,5-cis-dihydroxy-2-cyclopenten-1-yl)amino)methyl)-7-deazaguanosine). The polypeptide is Queuine tRNA-ribosyltransferase (Geobacillus kaustophilus (strain HTA426)).